Reading from the N-terminus, the 137-residue chain is Large ribosomal subunit protein uL16 (137 aa).

This sequence belongs to the universal ribosomal protein uL16 family. Part of the 50S ribosomal subunit.

In terms of biological role, binds 23S rRNA and is also seen to make contacts with the A and possibly P site tRNAs. The protein is Large ribosomal subunit protein uL16 of Coxiella burnetii (strain RSA 331 / Henzerling II).